The primary structure comprises 287 residues: Protease HtpX (287 aa).

The next 2 membrane-spanning stretches (helical) occupy residues 4–24 and 33–53; these read VFLL…VMSI and GGLL…SLAI. H139 is a Zn(2+) binding site. Residue E140 is part of the active site. H143 contacts Zn(2+). A run of 2 helical transmembrane segments spans residues 154-174 and 195-215; these read LIQG…AGII and GVVF…VAYF. Residue E220 coordinates Zn(2+).

It belongs to the peptidase M48B family. Zn(2+) is required as a cofactor.

Its subcellular location is the cell inner membrane. This is Protease HtpX from Shewanella denitrificans (strain OS217 / ATCC BAA-1090 / DSM 15013).